The following is a 358-amino-acid chain: Chorismate synthase (358 aa).

Residue Arg46 coordinates NADP(+). Residues 123–125 (RSS), 235–236 (NA), Gly275, 290–294 (KPTPS), and Arg316 contribute to the FMN site.

This sequence belongs to the chorismate synthase family. Homotetramer. It depends on FMNH2 as a cofactor.

The catalysed reaction is 5-O-(1-carboxyvinyl)-3-phosphoshikimate = chorismate + phosphate. It participates in metabolic intermediate biosynthesis; chorismate biosynthesis; chorismate from D-erythrose 4-phosphate and phosphoenolpyruvate: step 7/7. Catalyzes the anti-1,4-elimination of the C-3 phosphate and the C-6 proR hydrogen from 5-enolpyruvylshikimate-3-phosphate (EPSP) to yield chorismate, which is the branch point compound that serves as the starting substrate for the three terminal pathways of aromatic amino acid biosynthesis. This reaction introduces a second double bond into the aromatic ring system. In Helicobacter hepaticus (strain ATCC 51449 / 3B1), this protein is Chorismate synthase.